Reading from the N-terminus, the 549-residue chain is Polymorphic pseudokinase ROP5 (549 aa).

The first 24 residues, 1–24, serve as a signal peptide directing secretion; the sequence is MATKLARLATWLVLVGCLLWRAGA. A Protein kinase domain is found at 234–527; the sequence is LKLVEPLRVG…LEAMETPEFL (294 aa). Residues Arg-241, Asp-244, Arg-245, Ser-246, Lys-263, Met-337, Pro-338, Ala-340, Asp-343, and Asp-393 each coordinate ATP. Asp-244 contributes to the ADP binding site. Positions 246, 263, 337, 338, and 340 each coordinate ADP. Asp-393 serves as a coordination point for ADP. Residues Asp-393 and Asp-407 each contribute to the Mg(2+) site. N-linked (GlcNAc...) asparagine glycosylation occurs at Asn-434. Residues Cys-458 and Cys-492 are joined by a disulfide bond.

This sequence belongs to the protein kinase superfamily. Ser/Thr protein kinase family. In terms of assembly, component of a complex at least composed of ROP18 and ROP5. Interacts with GRA7. Interacts with ROP17. Interacts with mouse IRGA6/IIGP1; the interaction results in inhibition of IRGA6/IIGP1 GTPase activity and/or oligomerization.

It is found in the secreted. The protein localises to the parasitophorous vacuole. It localises to the cytoplasmic vesicle. The protein resides in the secretory vesicle. Its subcellular location is the rhoptry. Functionally, pseudokinase. Essential for virulence in the type I lineage. Mediates parasite survival in mouse monocytes. Required for the parasite ability to resist mouse innate immune effectors triggered by the IFN-gamma (IFNG). Reduces the accumulation of mouse IRGA6 (IIGP1) and IRGB6 (TGTP1/TGTP2), immunity-related GTPases (IRGs) that protect mice from infection by certain intracellular pathogens, on the parasitophorous vacuole and IRG-mediated killing of parasites by mouse cells. Regulates the activity of ROP18, an active kinase that targets IRGs to prevent IRG-mediated parasite killing by mouse cells. Acts as an allosteric inhibitor of mouse IRGA6 (IIGP1). Does not affect IFN-gamma (IFNG)-mediated parasite killing in human cells that do not possess the large variety of IRGs. The polypeptide is Polymorphic pseudokinase ROP5 (Toxoplasma gondii).